The sequence spans 565 residues: Phosphomethylpyrimidine synthase (565 aa).

Substrate is bound by residues Asn-203, Met-232, Tyr-261, His-297, Ser-317 to Gly-319, Asp-358 to Arg-361, and Glu-397. Residue His-401 coordinates Zn(2+). Substrate is bound at residue Tyr-424. His-465 provides a ligand contact to Zn(2+). [4Fe-4S] cluster contacts are provided by Cys-541, Cys-544, and Cys-549.

The protein belongs to the ThiC family. The cofactor is [4Fe-4S] cluster.

The catalysed reaction is 5-amino-1-(5-phospho-beta-D-ribosyl)imidazole + S-adenosyl-L-methionine = 4-amino-2-methyl-5-(phosphooxymethyl)pyrimidine + CO + 5'-deoxyadenosine + formate + L-methionine + 3 H(+). It participates in cofactor biosynthesis; thiamine diphosphate biosynthesis. Catalyzes the synthesis of the hydroxymethylpyrimidine phosphate (HMP-P) moiety of thiamine from aminoimidazole ribotide (AIR) in a radical S-adenosyl-L-methionine (SAM)-dependent reaction. The chain is Phosphomethylpyrimidine synthase from Bacteroides thetaiotaomicron (strain ATCC 29148 / DSM 2079 / JCM 5827 / CCUG 10774 / NCTC 10582 / VPI-5482 / E50).